The following is a 92-amino-acid chain: Putative pterin-4-alpha-carbinolamine dehydratase (92 aa).

This sequence belongs to the pterin-4-alpha-carbinolamine dehydratase family.

The catalysed reaction is (4aS,6R)-4a-hydroxy-L-erythro-5,6,7,8-tetrahydrobiopterin = (6R)-L-erythro-6,7-dihydrobiopterin + H2O. In Acidobacterium capsulatum (strain ATCC 51196 / DSM 11244 / BCRC 80197 / JCM 7670 / NBRC 15755 / NCIMB 13165 / 161), this protein is Putative pterin-4-alpha-carbinolamine dehydratase.